The following is an 840-amino-acid chain: Probable inorganic carbon transporter subunit DabA 2 (840 aa).

4 residues coordinate Zn(2+): Cys-356, Asp-358, His-540, and Cys-555.

The protein belongs to the inorganic carbon transporter (TC 9.A.2) DabA family. In terms of assembly, forms a complex with DabB. Requires Zn(2+) as cofactor.

It is found in the cell inner membrane. Functionally, part of an energy-coupled inorganic carbon pump. The protein is Probable inorganic carbon transporter subunit DabA 2 of Bradyrhizobium sp. (strain ORS 278).